The primary structure comprises 373 residues: Zinc finger protein CONSTANS (373 aa).

The segment at Asn15 to His57 adopts a B box-type 1; atypical zinc-finger fold. Zn(2+) contacts are provided by Cys20, Cys23, Cys43, His48, Cys63, Cys66, Cys86, and His91. A B box-type 2; atypical zinc finger spans residues Lys58 to Ile108. Positions Ser109–His120 are enriched in polar residues. Residues Ser109–Pro130 form a disordered region. Over residues His121 to Pro130 the composition is skewed to basic and acidic residues. The region spanning Arg306–Arg348 is the CCT domain.

It belongs to the CONSTANS family. As to quaternary structure, interacts with ADO3, SPA1, SPA2, SPA3 and SPA4. Interacts with MRG1 and MRG2 (via MRG domain). Interacts (via B-box) with MIP1A. Interacts with AS1 to form a functional complex regulating FT expression. Interacts with NFYC9. Component of a red light-dependent nuclear complex made of PHL, PHYB and CO. Interacts directly with PHL in the presence of PHYB. Expressed in leaves, shoots and shoot apical meristem. Detected in the vascular tissue of the hypocotyl, the cotyledons and the leaves. Restricted to the protoxylem and phloem in young inflorescence stems and to the phloem only in older inflorescences. Also detected in the vascular tissue of the root.

The protein resides in the nucleus. Transcription factor that acts in the long day flowering pathway and may mediate between the circadian clock and the control of flowering. Plays a role in the regulation of flowering time by acting on 'SUPPRESSOR OF OVEREXPRESSION OF CO1', 'TERMINAL FLOWER 1' and 'FLOWERING LOCUS T'. Also regulates P5CS2 and ACS10 (involved in proline and ethylene biosynthesis, respectively). Regulates the expression of NAKR1 by binding to the 5'-TGTG(N2-3)ATG-3' motif. In Arabidopsis thaliana (Mouse-ear cress), this protein is Zinc finger protein CONSTANS.